An 83-amino-acid chain; its full sequence is CDC42 small effector protein 2 (83 aa).

2 S-palmitoyl cysteine lipidation sites follow: cysteine 10 and cysteine 11. The CRIB domain maps to 28–41 (IGEPTNFVHTAHVG). 2 positions are modified to phosphoserine: serine 42 and serine 51.

This sequence belongs to the CDC42SE/SPEC family. Interacts with CDC42 (in GTP-bound form). Interacts weakly with RAC1 and not at all with RHOA.

The protein resides in the cytoplasm. It is found in the cytoskeleton. Its subcellular location is the cell membrane. The protein localises to the cell projection. It localises to the phagocytic cup. In terms of biological role, probably involved in the organization of the actin cytoskeleton by acting downstream of CDC42, inducing actin filament assembly. Alters CDC42-induced cell shape changes. In activated T-cells, may play a role in CDC42-mediated F-actin accumulation at the immunological synapse. May play a role in early contractile events in phagocytosis in macrophages. The polypeptide is CDC42 small effector protein 2 (Cdc42se2) (Rattus norvegicus (Rat)).